We begin with the raw amino-acid sequence, 365 residues long: Probable dual-specificity RNA methyltransferase RlmN (365 aa).

Residue glutamate 99 is the Proton acceptor of the active site. A Radical SAM core domain is found at 105–344 (QSYGLSVCVT…CVVRQEHGTD (240 aa)). A disulfide bridge links cysteine 112 with cysteine 349. Residues cysteine 119, cysteine 123, and cysteine 126 each contribute to the [4Fe-4S] cluster site. S-adenosyl-L-methionine-binding positions include 171-172 (GE), serine 203, 227-229 (SLH), and asparagine 305. The S-methylcysteine intermediate role is filled by cysteine 349.

Belongs to the radical SAM superfamily. RlmN family. Requires [4Fe-4S] cluster as cofactor.

The protein resides in the cytoplasm. The catalysed reaction is adenosine(2503) in 23S rRNA + 2 reduced [2Fe-2S]-[ferredoxin] + 2 S-adenosyl-L-methionine = 2-methyladenosine(2503) in 23S rRNA + 5'-deoxyadenosine + L-methionine + 2 oxidized [2Fe-2S]-[ferredoxin] + S-adenosyl-L-homocysteine. The enzyme catalyses adenosine(37) in tRNA + 2 reduced [2Fe-2S]-[ferredoxin] + 2 S-adenosyl-L-methionine = 2-methyladenosine(37) in tRNA + 5'-deoxyadenosine + L-methionine + 2 oxidized [2Fe-2S]-[ferredoxin] + S-adenosyl-L-homocysteine. Specifically methylates position 2 of adenine 2503 in 23S rRNA and position 2 of adenine 37 in tRNAs. In Lactococcus lactis subsp. cremoris (strain MG1363), this protein is Probable dual-specificity RNA methyltransferase RlmN.